Reading from the N-terminus, the 330-residue chain is Mas-related G-protein coupled receptor member B8 (330 aa).

At methionine 1–serine 33 the chain is on the extracellular side. Asparagine 16 carries N-linked (GlcNAc...) asparagine glycosylation. Residues leucine 34–leucine 54 form a helical membrane-spanning segment. Topologically, residues glycine 55–alanine 62 are cytoplasmic. Residues phenylalanine 63–valine 83 form a helical membrane-spanning segment. Topologically, residues phenylalanine 84–alanine 101 are extracellular. The helical transmembrane segment at leucine 102–isoleucine 122 threads the bilayer. Over serine 123 to threonine 146 the chain is Cytoplasmic. The helical transmembrane segment at valine 147–cysteine 167 threads the bilayer. The Extracellular portion of the chain corresponds to lysine 168–aspartate 177. Residues methionine 178–serine 198 traverse the membrane as a helical segment. Over arginine 199 to arginine 219 the chain is Cytoplasmic. Residues leucine 220–isoleucine 240 traverse the membrane as a helical segment. Topologically, residues cysteine 241 to glutamate 260 are extracellular. A helical transmembrane segment spans residues threonine 261–glycine 281. Residues serine 282–leucine 330 lie on the Cytoplasmic side of the membrane. The segment at glutamine 302–leucine 330 is disordered. Positions serine 304–leucine 330 are enriched in acidic residues.

This sequence belongs to the G-protein coupled receptor 1 family. Mas subfamily.

It localises to the membrane. Orphan receptor. Probably involved in the function of nociceptive neurons. May regulate nociceptor function and/or development, including the sensation or modulation of pain. The sequence is that of Mas-related G-protein coupled receptor member B8 (Mrgprb8) from Mus musculus (Mouse).